Consider the following 242-residue polypeptide: Type III pantothenate kinase (242 aa).

5-12 (DLGNTRLK) is a binding site for ATP. Substrate is bound by residues tyrosine 94 and 100 to 103 (GCDR). Aspartate 102 functions as the Proton acceptor in the catalytic mechanism. ATP is bound at residue threonine 124. A substrate-binding site is contributed by threonine 175.

This sequence belongs to the type III pantothenate kinase family. In terms of assembly, homodimer. It depends on NH4(+) as a cofactor. Requires K(+) as cofactor.

The protein resides in the cytoplasm. The catalysed reaction is (R)-pantothenate + ATP = (R)-4'-phosphopantothenate + ADP + H(+). The protein operates within cofactor biosynthesis; coenzyme A biosynthesis; CoA from (R)-pantothenate: step 1/5. Catalyzes the phosphorylation of pantothenate (Pan), the first step in CoA biosynthesis. This Psychrobacter arcticus (strain DSM 17307 / VKM B-2377 / 273-4) protein is Type III pantothenate kinase.